The primary structure comprises 224 residues: Homeobox protein Hox-B6 (224 aa).

The Antp-type hexapeptide motif lies at 127–132; sequence VYPWMQ. The segment at residues 146 to 205 is a DNA-binding region (homeobox); it reads GRRGRQTYTRYQTLELEKEFHYNRYLTRRRRIEIAHALCLTERQIKIWFQNRRMKWKKES. A Phosphoserine modification is found at Ser-214.

This sequence belongs to the Antp homeobox family.

Its subcellular location is the nucleus. Functionally, sequence-specific transcription factor which is part of a developmental regulatory system that provides cells with specific positional identities on the anterior-posterior axis. This chain is Homeobox protein Hox-B6 (Hoxb6), found in Mus musculus (Mouse).